The chain runs to 134 residues: Aspartate 1-decarboxylase (134 aa).

Ser-25 acts as the Schiff-base intermediate with substrate; via pyruvic acid in catalysis. Pyruvic acid (Ser) is present on Ser-25. Substrate is bound at residue Thr-57. Tyr-58 (proton donor) is an active-site residue. A substrate-binding site is contributed by 73–75 (GAA).

This sequence belongs to the PanD family. As to quaternary structure, heterooctamer of four alpha and four beta subunits. It depends on pyruvate as a cofactor. Post-translationally, is synthesized initially as an inactive proenzyme, which is activated by self-cleavage at a specific serine bond to produce a beta-subunit with a hydroxyl group at its C-terminus and an alpha-subunit with a pyruvoyl group at its N-terminus.

It is found in the cytoplasm. The catalysed reaction is L-aspartate + H(+) = beta-alanine + CO2. Its pathway is cofactor biosynthesis; (R)-pantothenate biosynthesis; beta-alanine from L-aspartate: step 1/1. Functionally, catalyzes the pyruvoyl-dependent decarboxylation of aspartate to produce beta-alanine. The sequence is that of Aspartate 1-decarboxylase from Mycolicibacterium gilvum (strain PYR-GCK) (Mycobacterium gilvum (strain PYR-GCK)).